A 605-amino-acid polypeptide reads, in one-letter code: Probable Xaa-Pro aminopeptidase P (605 aa).

Mn(2+)-binding residues include Asp402, Asp413, Glu511, and Glu525.

It belongs to the peptidase M24B family. The cofactor is Mn(2+).

It catalyses the reaction Release of any N-terminal amino acid, including proline, that is linked to proline, even from a dipeptide or tripeptide.. Its function is as follows. Catalyzes the removal of a penultimate prolyl residue from the N-termini of peptides. The chain is Probable Xaa-Pro aminopeptidase P (AMPP) from Leptosphaeria maculans (strain JN3 / isolate v23.1.3 / race Av1-4-5-6-7-8) (Blackleg fungus).